Consider the following 183-residue polypeptide: Threonylcarbamoyl-AMP synthase (183 aa).

The 183-residue stretch at 1–183 folds into the YrdC-like domain; that stretch reads MNREQIANAL…LRTNQLFRQG (183 aa).

Belongs to the SUA5 family. TsaC subfamily.

It localises to the cytoplasm. It catalyses the reaction L-threonine + hydrogencarbonate + ATP = L-threonylcarbamoyladenylate + diphosphate + H2O. Required for the formation of a threonylcarbamoyl group on adenosine at position 37 (t(6)A37) in tRNAs that read codons beginning with adenine. Catalyzes the conversion of L-threonine, HCO(3)(-)/CO(2) and ATP to give threonylcarbamoyl-AMP (TC-AMP) as the acyladenylate intermediate, with the release of diphosphate. In Haemophilus influenzae (strain PittEE), this protein is Threonylcarbamoyl-AMP synthase.